The following is a 409-amino-acid chain: Tyrosine--tRNA ligase (409 aa).

Tyr39 contributes to the L-tyrosine binding site. Positions 44 to 53 match the 'HIGH' region motif; the sequence is PTAASLHVGS. L-tyrosine-binding residues include Tyr176 and Gln180. The 'KMSKS' region motif lies at 236 to 240; the sequence is KMGKT. Residue Lys239 coordinates ATP. The 63-residue stretch at 346–408 folds into the S4 RNA-binding domain; sequence ISLVDALVGL…GKKAHGVIQA (63 aa).

Belongs to the class-I aminoacyl-tRNA synthetase family. TyrS type 1 subfamily. In terms of assembly, homodimer.

It is found in the cytoplasm. The enzyme catalyses tRNA(Tyr) + L-tyrosine + ATP = L-tyrosyl-tRNA(Tyr) + AMP + diphosphate + H(+). In terms of biological role, catalyzes the attachment of tyrosine to tRNA(Tyr) in a two-step reaction: tyrosine is first activated by ATP to form Tyr-AMP and then transferred to the acceptor end of tRNA(Tyr). The sequence is that of Tyrosine--tRNA ligase from Zymomonas mobilis subsp. mobilis (strain ATCC 31821 / ZM4 / CP4).